The chain runs to 1651 residues: Alsin (1651 aa).

RCC1 repeat units lie at residues 59-108 (DGEV…AVTE), 109-167 (SGVV…ALSI), and 169-218 (REIW…ALVQ). Positions 444-476 (REEQVKQESLQGKKSSSLMDIREEESEGGSRRL) are disordered. The span at 450-461 (QESLQGKKSSSL) shows a compositional bias: polar residues. Serine 459, serine 460, serine 477, and serine 486 each carry phosphoserine. The residue at position 504 (threonine 504) is a Phosphothreonine. RCC1 repeat units lie at residues 519–570 (RTEV…ALTA) and 572–621 (SQVY…FLVD). Lysine 527 is modified (N6-acetyllysine). Positions 684 to 879 (GYIASLHELA…ESLALHLGKK (196 aa)) constitute a DH domain. Residues 895-1001 (GKMTDSLRKP…RAISQAVDQA (107 aa)) form the PH domain. MORN repeat units lie at residues 1043 to 1065 (YDGRWLSGKPHGRGVLKWPDGKV), 1066 to 1088 (YSGTFRNGLEDGYGEYRIPNKAL), 1094 to 1116 (YVGHWKEGKMCGQGVYSYASGEV), 1117 to 1139 (FEGCFQDNMRHGHGLLRSGKLTS), 1145 to 1167 (FIGQWVMDKKAGYGVFDDITRGE), 1169 to 1191 (YMGMWQDDACQGNGVVVTQFGLY), 1192 to 1214 (YEGNFHLNKMMGNGVLLSEDDTI), and 1215 to 1238 (YEGEFSDDWTLCGKGTLTMPNGDY). Serine 1329 is subject to Phosphoserine. A VPS9 domain is found at 1507–1651 (KQPDIALLGF…YYQIQREKLN (145 aa)).

As to quaternary structure, forms a heteromeric complex with ALS2CL. Interacts with ALS2CL.

Functionally, may act as a GTPase regulator. Controls survival and growth of spinal motoneurons. The chain is Alsin (Als2) from Rattus norvegicus (Rat).